The chain runs to 271 residues: Short-chain dehydrogenase PC-15 (271 aa).

Residues isoleucine 8, threonine 34, lysine 40, aspartate 56, asparagine 84, tyrosine 148, lysine 152, valine 181, and threonine 183 each contribute to the NADP(+) site. Tyrosine 148 acts as the Proton acceptor in catalysis. Lysine 152 (lowers pKa of active site Tyr) is an active-site residue.

It belongs to the short-chain dehydrogenases/reductases (SDR) family.

Its pathway is secondary metabolite biosynthesis. Functionally, short-chain dehydrogenase; part of the gene cluster that mediates the biosynthesis of the indole diterpenes penitrems. The geranylgeranyl diphosphate (GGPP) synthase penG catalyzes the first step in penitrem biosynthesis via conversion of farnesyl pyrophosphate and isopentyl pyrophosphate into geranylgeranyl pyrophosphate (GGPP). Condensation of indole-3-glycerol phosphate with GGPP by the prenyl transferase penC then forms 3-geranylgeranylindole (3-GGI). Epoxidation by the FAD-dependent monooxygenase penM leads to a epoxidized-GGI that is substrate of the terpene cyclase penB for cyclization to yield paspaline. Paspaline is subsequently converted to 13-desoxypaxilline by the cytochrome P450 monooxygenase penP, the latter being then converted to paxilline by the cytochrome P450 monooxygenase penQ. Paxilline is converted to beta-paxitriol via C-10 ketoreduction by the short-chain dehydrogenase PC-15 which can be monoprenylated at the C-20 by the indole diterpene prenyltransferase penD. A two-step elimination (acetylation and elimination) process performed by the O-acetyltransferase PC-16 and the P.simplicissimum ptmI-ortholog not yet identified in P.crustosum, leads to the production of the prenylated form of penijanthine. The FAD-linked oxidoreductase ptmO then converts the prenylated form of penijanthine into PC-M5 which is in turn transformed into PC-M4 by the aromatic dimethylallyltransferase PC-22. A series of oxidation steps involving 4 cytochrome P450 monooxygenases (PC-21, PC-05, PC-23, PC-20) and a FAD-dependent monooxygenase (PC-14) are required for the transformation of PC-M4 to penitrems A and E. Synthesis of these final products is proposed to proceed via penitrems D and C (PC-21, PC-05, PC-14) and penitrems B and F (PC-21, PC-05, PC-14, PC-23). The polypeptide is Short-chain dehydrogenase PC-15 (Penicillium crustosum (Blue mold fungus)).